The following is a 277-amino-acid chain: Probable redox regulatory protein ML2435 (277 aa).

The protein belongs to the Rv0495c family.

In terms of biological role, essential for maintaining intracellular redox homeostasis. The protein is Probable redox regulatory protein ML2435 of Mycobacterium leprae (strain TN).